Consider the following 134-residue polypeptide: DNA-directed RNA polymerase subunit omega (134 aa).

A disordered region spans residues 76-102; sequence EVDEPEPDPASMIAAGGAAAADSEEQD.

This sequence belongs to the RNA polymerase subunit omega family. As to quaternary structure, the RNAP catalytic core consists of 2 alpha, 1 beta, 1 beta' and 1 omega subunit. When a sigma factor is associated with the core the holoenzyme is formed, which can initiate transcription.

The enzyme catalyses RNA(n) + a ribonucleoside 5'-triphosphate = RNA(n+1) + diphosphate. Promotes RNA polymerase assembly. Latches the N- and C-terminal regions of the beta' subunit thereby facilitating its interaction with the beta and alpha subunits. This chain is DNA-directed RNA polymerase subunit omega, found in Rhizobium etli (strain ATCC 51251 / DSM 11541 / JCM 21823 / NBRC 15573 / CFN 42).